Consider the following 3326-residue polypeptide: MVKRKSSEGQEQDGGRGIPLPIQTFLWRQTSAFLRPKLGKQYEASCVSFERVLVENKLHGLSPALSEAIQSISRWELVQAALPHVLHCTATLLSNRNKLGHQDKLGVAETKLLHTLHWMLLEAPQDCNNDQFGGTDRGSSWGGSSSAFIHQIENQGSPGQPCRSSSHDEEENNRRKTFQNSMATVELFVFLFAPLVHRIKESDLTFRLASGLVIWQPMWEHRQPEVSGFTALVKPIRNIITAKRSSPINSQSQTCESPNQDTRQQGEGLQVVSEALQSDSISPKATISGCHQGNSFDGSLSSQTSQERGPSHSRASLVIPPCQRSRYATYFDVAVLRCLLQPHWSEEGTQWSLMYYLQRLRHMLEEKPEKTPDPDIPLLPRPRSSSMVAAAPSLVNTHKTQDLTMKCNEEEKSLSPEAFSKVSLTNLRRSAVPDLSSDLGMNIFKKFKSRKEDRERKGSIPFHHTGKRRPRRMGVPFLLHEDHLDVSPTRSTFSFGSFSGLGEDRRGIEKGGWQTTILGKLTRRGSSDAATEMESLSARHSHSHHTLVSDLPDHSNSHGENTVKEVRSQISTITVATFNTTLASFNVGYADFFSEHMRKLCSQVPIPEMPHEPLACANLPRSLTDSCINYSYLEDTEHIDGTNNFVHKNGMLDLSVVLKAVYLVLNHDISSRICDVALNIVECLLQLGVVPCVEKNRKKSENKENESVEKRPSEGAFQFKGVSSSSTSGFGAPSASGAGDGGGEEGGGGDGGGGGGGGDGGGGGGGGGGPYEKNEKNQEKDDNIPVSNHRLALTMLIKIVKSLGCAYGCGEGHRGLSGDRLRHQVFRENAQNCLTKLYKLDKIQFRQTMRDYVNKDSLNNVVDFLHALLGFCMEPVTDNKAGFGNNFTTVDNKSTAQNVEGIIVGAMFKSLITRCASTTHELHSPENLGLYCDIRQLVQFIKEAHGNVFRRVALSALLDSAEKLAPGKKVEENGQESKPVGSKRSEAGSIADKGQVSSAPEECRSFMSGRPSQTPEHDEPMQGGNLGRKDFWRKMFKSQSAASDTSSQSEQDTSECTTAHSGNTSDRRARSRSRRISLRKKLKLPIGNWLKRSSLSGLADGVEDLLDISSVDRLSFIRQSSKVKFTSAVKLSEGGPGSGMENGREEEENFFKRLGCHSFDDHLSPNQDGGKSKNVVNLGAIRQGMKRFQFLLNCCEPGTIPDASILAAALDLEAPVVARAALFLECARFVHRCNRGNWPEWMKGHHVNITKKGLSRGRSPTVGNKRNQKLQWSAAKLFYQWGDAIGIRLNELCHGESESPANLLGLIYDEETKRRLRKEDEEEDFLDDSTVNPSKCGCPFALKMAACQLLLEITTFLRETFSCLPRPRTEPLVDLESCRLRLDPELDRHRYERKISFAGVLDENEDSKDSLHSSSHTIKSDAGAEEKKVPSRKIRIGGSRLLQIKGTRSFQVKKGGSLSSIRRVGSLKSSKLSRQDSESEAEELQLSQSRDTVTDLEGSPWSASEPSIEPEGLSNAGTEENYHRNMSWLHVMILLCNQQSFICTHVDYCHPHCYLHHSRSCARLVRAIKLLYGDSVDSLRESNHISNVALRGKKQKECSDKSCLRTPSLKKRVSDVNLEGKKDSGMLKYIRFQVMSLSPAPLSLLIKAAPILTEEMYGDIQPAAWELLLSMDEHMAGAAAAMFLLCAVKVPDAVSDMLMSEFHHAETVQRLNAVLKFHTLWRFRYQVWPRMEEGAQQIFKIPPPSINFTLPSPVLGMPSVPMFDPPWVPQCSGSVQDPINEDQSKSFSARAVSRSHQRAEHILKNLQQEEEKKRLGREASLITAIPITQEACYEPTCTPNSEPEEEEEVANLTSRRLSVSPSCTSSTSHRNYSFRRGSVWSVRSAVSAEDEEHATEHTPNHHVPQPPQAVFPACICAAVLPIVHLMEDGEVREDGVAVSAVAQQVLWNCLIEDPSTVLRHFLEKLTISNRQDELMYMLRKLLLNIGDFPAQTSHILFNYLVGLIMYFVRTPCEWGMDAISATLTFLWEVVGYVEGLFFKDLKQTMKKEQCEVKLLVTASMPGTKTLVVHGQNECDIPTQLPVHEDTQFEALLKECLEFFNIPESQSTHYFLMDKRWNLIHYNKTYVRDIYPFRRSVSPQLNLVHMHPEKGQELIQKQVFTRKLEEVGRVLFLISLTQKIPTAHKQSHVSMLQEDLLRLPSFPRSAIDAEFSLFSDPQAGKELFGLDTLQKSLWIQLLEEMFLGMPSEFPWGDEIMLFLNVFNGALILHPEDSALLRQYAATVINTAVHFNHLFSLSGYQWILPTMLQVYSDYESNPQLRRAIEFACHQFYILHRKPFVLQLFASVAPLLEFPDAANTGSSKGVSAQCLFDLLQSLEGETTDILDILELVKAEKPLKSLDFCYGNEDLTFSISEAIKLCVTVVAYAPESFRSLQMLMVLEALVPCYLQKMKRQTSQVETVPAAREEIAATAALATSLQALLYSVEVLTRPMTAPQMSRSDQGHKGTTTANHTMSSGVNTRYPEQGAKLHFIRENLHLLEEGQGLPREELDERISREEFRRPRESLLNICTEFYKHCGPRLKILQNLAGEPRVTALELLDVKSHMRLAEIAHSLLKLAPYDTQTMESRGLRRYIMEMLPITDWSAEAVRPALILILKRLDRMFNKIHKMPTLRRQVEWEPASSLIEGVCLTLQRQPIISFLPHLRSLINVCVNLVMGVVGPSSVADGLPLLHLSPYLSPPLPFSTAVVRLVALQIQALKEDFPLSHVISPFTNQERREGMLLNLLIPFVLTVGSGSKDSPWLEQPEVQLLLQTVINVLLPPRIISTSRSKNFMLESSPAHCSTPGDAGKDLRKEGLAESTSQAAYLALKVILVCFERQLGSQWYWLSLQVKEMALRKVGGLALWDFLDFIVRTRIPIFVLLRPFIQCKLLAQPAENHEELSARQHISDQLERRFIPRPLCKSSLIAEFNSELKILKEAVHSGSAYQGKTSISTVGTSTSAYRLSLATMSRSNTGTGTVWEQDSEPSQQASQDTLSRTDEEDEENDSVSMPSVVSEQEACLLSTIGRRRFSSHVSSMSAPQAEVGMLPSQSEPNVLDDSQGLAAEGSLSRVASIQSEPGQQNVLLQQPLGRKRGLRQLRRPLLSRQKTQTEPRNRHGARLSTTRRSIQPKTKPSVDQKRSVTFIEAQPEPTAAPTDIFPATGQPQSCSPGRARKPEGTEKPVLTSSPAIIIADLHSLSPKQSEPLLAEEGEKKEDEEIQGATAHCPLSTQLSDPDDFTGLETSSLLQHGDTVLHISEENGTENPLLSSQFTFTPPELGDTDSALDESHV.

A compositionally biased stretch (polar residues) spans 152-164; it reads IENQGSPGQPCRS. Disordered regions lie at residues 152-178, 243-267, 283-317, and 450-469; these read IENQGSPGQPCRSSSHDEEENNRRKTF, KRSSPINSQSQTCESPNQDTRQQGE, PKATISGCHQGNSFDGSLSSQTSQERGPSHSRASL, and RKEDRERKGSIPFHHTGKRR. Serine 257 is subject to Phosphoserine. Polar residues predominate over residues 283–308; it reads PKATISGCHQGNSFDGSLSSQTSQER. Serine 526 is modified (phosphoserine). Disordered stretches follow at residues 536–560, 697–785, 967–1076, 1405–1430, and 1469–1516; these read LSARHSHSHHTLVSDLPDHSNSHGE, RKKS…DNIP, GKKV…SRRI, EDSKDSLHSSSHTIKSDAGAEEKKVP, and SSKL…LSNA. 2 stretches are compositionally biased toward basic and acidic residues: residues 551 to 560 and 699 to 713; these read LPDHSNSHGE and KSENKENESVEKRPS. Low complexity predominate over residues 723-737; the sequence is SSSSTSGFGAPSASG. Over residues 738 to 770 the composition is skewed to gly residues; the sequence is AGDGGGEEGGGGDGGGGGGGGDGGGGGGGGGGP. Over residues 772-783 the composition is skewed to basic and acidic residues; it reads EKNEKNQEKDDN. Positions 1038–1055 are enriched in low complexity; the sequence is SQSAASDTSSQSEQDTSE. Positions 1418–1429 are enriched in basic and acidic residues; sequence IKSDAGAEEKKV. Transmembrane regions (helical) follow at residues 2336–2356 and 2466–2486; these read PFVLQLFASVAPLLEFPDAAN and IAATAALATSLQALLYSVEVL. The interval 2493–2515 is disordered; that stretch reads PQMSRSDQGHKGTTTANHTMSSG. A run of 2 helical transmembrane segments spans residues 2853–2873 and 2899–2919; these read GLAESTSQAAYLALKVILVCF and LALWDFLDFIVRTRIPIFVLL. The span at 3010–3032 shows a compositional bias: polar residues; sequence NTGTGTVWEQDSEPSQQASQDTL. The disordered stretch occupies residues 3010 to 3052; the sequence is NTGTGTVWEQDSEPSQQASQDTLSRTDEEDEENDSVSMPSVVS. A Phosphoserine modification is found at serine 3110. 3 disordered regions span residues 3122 to 3222, 3236 to 3271, and 3296 to 3326; these read LQQP…VLTS, PKQSEPLLAEEGEKKEDEEIQGATAHCPLSTQLSDP, and NGTENPLLSSQFTFTPPELGDTDSALDESHV. Positions 3127 to 3136 are enriched in basic residues; it reads GRKRGLRQLR. Residues 3157 to 3168 are compositionally biased toward polar residues; sequence LSTTRRSIQPKT. Residues 3298–3309 show a composition bias toward polar residues; sequence TENPLLSSQFTF. Over residues 3315 to 3326 the composition is skewed to acidic residues; it reads GDTDSALDESHV.

The protein belongs to the unc-80 family. NALCN complex consists of NALCN and auxiliary subunits, UNC79, UNC80 and NACL1. These auxiliary subunits are essential for the NALCN complex function. Interacts (via N-terminus half) with NALCN; this interaction facilitates NALCN surface localization. Interacts (via C-terminus) with UNC79. UNC80 bridges NALCN to UNC79. In terms of processing, phosphorylated on tyrosine residues. As to expression, expressed almost exclusively in the brain. Expressed in hippocampus and ventral tegmental area neurons.

The protein resides in the cell membrane. Its subcellular location is the cell projection. It localises to the dendrite. Functionally, auxiliary subunit of the NALCN sodium channel complex. The NALCN sodium channel complex is a voltage-gated ion channel responsible for the resting Na(+) permeability that controls neuronal excitability. This complex is activated by neuropeptides substance P, neurotensin. In addition, the channel is inhibited by extracellular Ca(2+) through the Ca(2+)-sensing receptor. UNC80 is essential for NALCN sensitivity to extracellular calcium. This Mus musculus (Mouse) protein is Protein unc-80 homolog (Unc80).